Reading from the N-terminus, the 196-residue chain is MSATSILIAAAESGHSDENVLIPPLSELLIGTLSFALLVAFFFWKIRPQIARTYAQRTERIEGGLARAEAAQREAQALLEQYRAQLAEARTEAARIREEAHSEGRQITEELRAAAQREIAEIKARADAQLAADRAQIVAQVRREVGEIAVDLASKIVGFQLESSATQNRLIDDFIAALDNSAEGVGTVAAPVRPGG.

A helical membrane pass occupies residues 24 to 44; that stretch reads PLSELLIGTLSFALLVAFFFW.

The protein belongs to the ATPase B chain family. F-type ATPases have 2 components, F(1) - the catalytic core - and F(0) - the membrane proton channel. F(1) has five subunits: alpha(3), beta(3), gamma(1), delta(1), epsilon(1). F(0) has three main subunits: a(1), b(2) and c(10-14). The alpha and beta chains form an alternating ring which encloses part of the gamma chain. F(1) is attached to F(0) by a central stalk formed by the gamma and epsilon chains, while a peripheral stalk is formed by the delta and b chains.

The protein resides in the cell membrane. Its function is as follows. F(1)F(0) ATP synthase produces ATP from ADP in the presence of a proton or sodium gradient. F-type ATPases consist of two structural domains, F(1) containing the extramembraneous catalytic core and F(0) containing the membrane proton channel, linked together by a central stalk and a peripheral stalk. During catalysis, ATP synthesis in the catalytic domain of F(1) is coupled via a rotary mechanism of the central stalk subunits to proton translocation. In terms of biological role, component of the F(0) channel, it forms part of the peripheral stalk, linking F(1) to F(0). The polypeptide is ATP synthase subunit b (Frankia casuarinae (strain DSM 45818 / CECT 9043 / HFP020203 / CcI3)).